The primary structure comprises 499 residues: Ammonium transporter MEP2 (499 aa).

At 1–31 (MSYNFTGTPTGEGTGGNSLTTDLNTQFDLAN) the chain is on the extracellular side. Residue Asn4 is glycosylated (N-linked (GlcNAc...) asparagine). A helical transmembrane segment spans residues 32–52 (MGWIGVASAGVWIMVPGIGLL). The Cytoplasmic portion of the chain corresponds to 53–62 (YSGLSRKKHA). A helical transmembrane segment spans residues 63 to 83 (LSLLWASMMASAVCIFQWFFW). Residues 84–122 (GYSLAFSHNTRGNGFIGTLEFFGFRNVLGAPSSVSSLPD) are Extracellular-facing. A helical transmembrane segment spans residues 123–143 (ILFAVYQGMFAAVTGALMLGG). Residues 144–152 (ACERARLFP) are Cytoplasmic-facing. Residues 153–173 (MMVFLFLWMTIVYCPIACWVW) form a helical membrane-spanning segment. The Extracellular portion of the chain corresponds to 174 to 187 (NAEGWLVKLGSLDY). The chain crosses the membrane as a helical span at residues 188–208 (AGGLCVHLTSGHGGLVYALIL). Topologically, residues 209–230 (GKRNDPVTRKGMPKYKPHSVTS) are cytoplasmic. Residues 231–251 (VVLGTVFLWFGWMFFNGGSAG) traverse the membrane as a helical segment. At 252–257 (NATIRA) the chain is on the extracellular side. The chain crosses the membrane as a helical span at residues 258–278 (WYSIMSTNLAAACGGLTWMVI). Topologically, residues 279–289 (DYFRCGRKWTT) are cytoplasmic. Residues 290–312 (VGLCSGIIAGLVGITPAAGFVPI) form a helical membrane-spanning segment. Residues 313–315 (WSA) are Extracellular-facing. Residues 316–338 (VVIGVVTGAGCNLAVDLKSLLRI) form a helical membrane-spanning segment. Residues 339–346 (DDGLDCYS) are Cytoplasmic-facing. Residues 347-367 (IHGVGGCIGSVLTGIFAADYV) form a helical membrane-spanning segment. Residues 368-393 (NATAGSYISPIDGGWINHHYKQVGYQ) are Extracellular-facing. A helical transmembrane segment spans residues 394-414 (LAGICAALAWTVTVTSILLLT). Topologically, residues 415–499 (MNAIPFLKLR…SSTKNTDHIV (85 aa)) are cytoplasmic. The interval 428–441 (DEEELGTDAAQIGE) is enhancer domain. Residues 442–449 (FTYEESTA) are linker domain. The tract at residues 450-485 (YIPEPIRSKTSAQMPPPHENIDDKIVGNTDAEKNST) is autoinhibitory domain. Residues 455–499 (IRSKTSAQMPPPHENIDDKIVGNTDAEKNSTPSDASSTKNTDHIV) are disordered. At Ser457 the chain carries Phosphoserine. Basic and acidic residues predominate over residues 468-482 (ENIDDKIVGNTDAEK). Residues 483 to 493 (NSTPSDASSTK) show a composition bias toward polar residues.

Belongs to the ammonia transporter channel (TC 1.A.11.2) family. In terms of processing, phosphorylated at Ser-457 by the TORC1 effector kinase NPR1 under nitrogen-limiting conditions which causes a conformational change in the C-terminal region (CTR) to form an open active conformation. Supplementation of nitrogen source leads to inactivation and instant Ser-457 dephosphorylation via plasma membrane PSR1 and PSR2 redundant phosphatases. Post-translationally, the residue Asn-4 of the protein's N-terminal tail is the only site that is glycosylated.

It is found in the cell membrane. Its function is as follows. Transporter for ammonium (both charged and uncharged NH3 and NH4) to use as a nitrogen source. The affinity of MEP2 is about twenty times higher than that of MEP1. MEP3 has the lowest affinity. Under ammonium limitation acts as an ammonium sensor, generating a signal that leads to pseudohyphal (filamentous) growth. The protein is Ammonium transporter MEP2 of Saccharomyces cerevisiae (strain ATCC 204508 / S288c) (Baker's yeast).